A 171-amino-acid chain; its full sequence is Small ribosomal subunit protein uS5 (171 aa).

One can recognise an S5 DRBM domain in the interval 16–79 (LVERLVTVDR…EAAKRNMITV (64 aa)).

Belongs to the universal ribosomal protein uS5 family. As to quaternary structure, part of the 30S ribosomal subunit. Contacts proteins S4 and S8.

Functionally, with S4 and S12 plays an important role in translational accuracy. In terms of biological role, located at the back of the 30S subunit body where it stabilizes the conformation of the head with respect to the body. The polypeptide is Small ribosomal subunit protein uS5 (Psychrobacter arcticus (strain DSM 17307 / VKM B-2377 / 273-4)).